A 314-amino-acid chain; its full sequence is MAEEPQRSPAPTSPFAFTVPSNPLSDLPDIPSDRPVLIAGPTASGKSALAARLVEDGGGVVVNADALQVYDCWRLLSARPSAAEEAALPHRLYGHVGARQTYSAGHWLKEVAAVLAEGLRPVIVGGTGLYFSALTEGLAEIPHTPPEVRAEADARLAEAGLARMVAELDAETAARIDLQNPARVQRAWEVLRATGRGLARWQAETAPPLLPLSDATALVIRPDPAWLAQRIDSRFDLMMADGALDEVRATLPGWDPALPSARAIGAPELVAHLRGEIPLDEAIAAAKLASRQYAKRQRTWFRNRMRLWHEIRLP.

The segment at 1–24 is disordered; that stretch reads MAEEPQRSPAPTSPFAFTVPSNPL. 40–47 serves as a coordination point for ATP; that stretch reads GPTASGKS. 42 to 47 contacts substrate; sequence TASGKS.

This sequence belongs to the IPP transferase family. In terms of assembly, monomer. Mg(2+) is required as a cofactor.

The enzyme catalyses adenosine(37) in tRNA + dimethylallyl diphosphate = N(6)-dimethylallyladenosine(37) in tRNA + diphosphate. Its function is as follows. Catalyzes the transfer of a dimethylallyl group onto the adenine at position 37 in tRNAs that read codons beginning with uridine, leading to the formation of N6-(dimethylallyl)adenosine (i(6)A). The chain is tRNA dimethylallyltransferase from Cereibacter sphaeroides (strain ATCC 17029 / ATH 2.4.9) (Rhodobacter sphaeroides).